Reading from the N-terminus, the 333-residue chain is Fructose-1,6-bisphosphatase class 1 (333 aa).

Mg(2+) is bound by residues Glu-92, Asp-113, Leu-115, and Asp-116. Substrate is bound by residues Asp-116–Ser-119, Asn-209, Tyr-242, and Lys-272. Glu-278 is a Mg(2+) binding site.

This sequence belongs to the FBPase class 1 family. Homotetramer. Requires Mg(2+) as cofactor.

Its subcellular location is the cytoplasm. It catalyses the reaction beta-D-fructose 1,6-bisphosphate + H2O = beta-D-fructose 6-phosphate + phosphate. It participates in carbohydrate biosynthesis; Calvin cycle. In Pelodictyon phaeoclathratiforme (strain DSM 5477 / BU-1), this protein is Fructose-1,6-bisphosphatase class 1.